The following is a 1137-amino-acid chain: Phytochrome C (1137 aa).

The segment covering 1–18 has biased composition (low complexity); the sequence is MSSSRSNNRATCSRSSSA. Residues 1-27 form a disordered region; that stretch reads MSSSRSNNRATCSRSSSARSKHSARVV. In terms of domain architecture, GAF spans 217–400; the sequence is NLSLLCDVLV…VFGIQINKEV (184 aa). Cysteine 322 lines the phytochromobilin pocket. PAS domains are found at residues 620–690 and 750–824; these read VTNE…LQGI and IQGD…TKLS. The Histidine kinase domain maps to 904–1124; that stretch reads YIRQELRNPL…IVLVEFPVAQ (221 aa).

Belongs to the phytochrome family. As to quaternary structure, homodimer. Contains one covalently linked phytochromobilin chromophore.

In terms of biological role, regulatory photoreceptor which exists in two forms that are reversibly interconvertible by light: the Pr form that absorbs maximally in the red region of the spectrum and the Pfr form that absorbs maximally in the far-red region. Photoconversion of Pr to Pfr induces an array of morphogenic responses, whereas reconversion of Pfr to Pr cancels the induction of those responses. Pfr controls the expression of a number of nuclear genes including those encoding the small subunit of ribulose-bisphosphate carboxylase, chlorophyll A/B binding protein, protochlorophyllide reductase, rRNA, etc. It also controls the expression of its own gene(s) in a negative feedback fashion. The chain is Phytochrome C (PHYC) from Oryza sativa subsp. indica (Rice).